The primary structure comprises 425 residues: Serine--tRNA ligase (425 aa).

226 to 228 (TSE) provides a ligand contact to L-serine. Residues 257–259 (RRE) and V273 contribute to the ATP site. E280 is an L-serine binding site. 344-347 (ELTS) lines the ATP pocket. L-serine is bound at residue T382.

The protein belongs to the class-II aminoacyl-tRNA synthetase family. Type-1 seryl-tRNA synthetase subfamily. In terms of assembly, homodimer. The tRNA molecule binds across the dimer.

Its subcellular location is the cytoplasm. The catalysed reaction is tRNA(Ser) + L-serine + ATP = L-seryl-tRNA(Ser) + AMP + diphosphate + H(+). It catalyses the reaction tRNA(Sec) + L-serine + ATP = L-seryl-tRNA(Sec) + AMP + diphosphate + H(+). Its pathway is aminoacyl-tRNA biosynthesis; selenocysteinyl-tRNA(Sec) biosynthesis; L-seryl-tRNA(Sec) from L-serine and tRNA(Sec): step 1/1. Its function is as follows. Catalyzes the attachment of serine to tRNA(Ser). Is also able to aminoacylate tRNA(Sec) with serine, to form the misacylated tRNA L-seryl-tRNA(Sec), which will be further converted into selenocysteinyl-tRNA(Sec). In Mycobacterium avium (strain 104), this protein is Serine--tRNA ligase.